A 174-amino-acid polypeptide reads, in one-letter code: ATP synthase subunit delta (174 aa).

This sequence belongs to the ATPase delta chain family. F-type ATPases have 2 components, F(1) - the catalytic core - and F(0) - the membrane proton channel. F(1) has five subunits: alpha(3), beta(3), gamma(1), delta(1), epsilon(1). F(0) has three main subunits: a(1), b(2) and c(10-14). The alpha and beta chains form an alternating ring which encloses part of the gamma chain. F(1) is attached to F(0) by a central stalk formed by the gamma and epsilon chains, while a peripheral stalk is formed by the delta and b chains.

The protein localises to the cell inner membrane. Its function is as follows. F(1)F(0) ATP synthase produces ATP from ADP in the presence of a proton or sodium gradient. F-type ATPases consist of two structural domains, F(1) containing the extramembraneous catalytic core and F(0) containing the membrane proton channel, linked together by a central stalk and a peripheral stalk. During catalysis, ATP synthesis in the catalytic domain of F(1) is coupled via a rotary mechanism of the central stalk subunits to proton translocation. Functionally, this protein is part of the stalk that links CF(0) to CF(1). It either transmits conformational changes from CF(0) to CF(1) or is implicated in proton conduction. This is ATP synthase subunit delta from Helicobacter hepaticus (strain ATCC 51449 / 3B1).